The following is a 58-amino-acid chain: Proteinase inhibitor PSKP-1 (58 aa).

One can recognise a Kazal-like domain in the interval 1–58 (VIEPKCYKYEGKKCPPDINPVCGTDKRTYYNECALCVFIRQSTKKADKAIKIKKWGKC). Cystine bridges form between C6–C36, C14–C33, and C22–C58.

Monomer. Skin.

It localises to the secreted. Functionally, has antibacterial activity against Gram-negative bacterium E.coli ATCC 11229. Shows hemagglutinating activity. Inhibits prolyl endopeptidase, but not trypsin, chymotrypsin, V8 protease and proteinase K. May have a role in mucosal defense against microbes by interacting directly with their membranes. The sequence is that of Proteinase inhibitor PSKP-1 from Phyllomedusa sauvagei (Sauvage's leaf frog).